A 1420-amino-acid polypeptide reads, in one-letter code: ABC transporter G family member 32 (1420 aa).

An ABC transporter 1 domain is found at 135-408 (LRNIHVIGGK…FSSLGFTCPD (274 aa)). Residue 168 to 175 (GPPSSGKT) participates in ATP binding. Residues 486 to 699 (ELLKINFAWQ…AQNAASVNEF (214 aa)) form the ABC transmembrane type-2 1 domain. The next 7 helical transmembrane spans lie at 504–524 (FIYVFKFVQLLLVALITMTVF), 544–564 (LYFSMVIILFNGFTEVPMLVA), 585–605 (LPSWLLSIPTSIIESATWVAV), 623–643 (FLLYFSLHQMSLGLFRVMGSL), 648–668 (IVANTFGSFAMLVVMTLGGFI), 674–694 (IPSWWIWGYWISPLMYAQNAA), and 735–755 (IGVAALLGYTVLFNILFTLFL). The region spanning 818 to 1070 (LSFSNINYYV…ELIKYFESIE (253 aa)) is the ABC transporter 2 domain. 863–870 (GVSGAGKT) provides a ligand contact to ATP. The 215-residue stretch at 1143 to 1357 (SQFVACLWKQ…TLYGLLVSQY (215 aa)) folds into the ABC transmembrane type-2 2 domain. 7 consecutive transmembrane segments (helical) span residues 1162–1182 (YTAVRFFYTVVISLMLGTICW), 1202–1222 (YAAVLFIGITNATAAQPVVSI), 1235–1255 (MYSALPFAFAQVFIEFPYVLA), 1277–1297 (FLWYLFFMYFSIMYFTFYGMM), 1307–1327 (VASIIAAPFYMLWNLFSGFMI), 1334–1354 (LWWRWYYWANPVAWTLYGLLV), and 1392–1412 (VSAIMVVAFCVFFSLVFAFAI).

This sequence belongs to the ABC transporter superfamily. ABCG family. PDR (TC 3.A.1.205) subfamily. Ubiquitous in aerial organs. Higher expression levels in young, expanding tissues than in older tissues. Detected in the epidermal layer.

It localises to the cell membrane. May be a general defense protein. Required for the formation of the cuticle layer of the cell wall. This Arabidopsis thaliana (Mouse-ear cress) protein is ABC transporter G family member 32.